A 183-amino-acid polypeptide reads, in one-letter code: Caspase recruitment domain-containing protein 19 (183 aa).

An intrachain disulfide couples Cys-7 to Cys-77. One can recognise a CARD domain in the interval 8–99 (DRLVQDTPFL…PLHSCLPSRH (92 aa)). A helical transmembrane segment spans residues 122–142 (GPVAFLTCLGLAAGLALLIYC).

As to quaternary structure, associates with BCL10 by CARD-CARD interaction.

It localises to the endoplasmic reticulum membrane. The protein localises to the mitochondrion membrane. Functionally, plays a role in inhibiting the effects of BCL10-induced activation of NF-kappa-B. May inhibit the phosphorylation of BCL10 in a CARD-dependent manner. The polypeptide is Caspase recruitment domain-containing protein 19 (CARD19) (Bos taurus (Bovine)).